Reading from the N-terminus, the 248-residue chain is tRNA (guanine-N(1)-)-methyltransferase (248 aa).

Residues Gly113 and 133-138 each bind S-adenosyl-L-methionine; that span reads IGDYVL.

It belongs to the RNA methyltransferase TrmD family. Homodimer.

The protein localises to the cytoplasm. It catalyses the reaction guanosine(37) in tRNA + S-adenosyl-L-methionine = N(1)-methylguanosine(37) in tRNA + S-adenosyl-L-homocysteine + H(+). Its function is as follows. Specifically methylates guanosine-37 in various tRNAs. The sequence is that of tRNA (guanine-N(1)-)-methyltransferase from Shewanella denitrificans (strain OS217 / ATCC BAA-1090 / DSM 15013).